Reading from the N-terminus, the 375-residue chain is Chaperone protein DnaJ (375 aa).

The J domain occupies aspartate 5–glycine 70. Residues glycine 130–serine 208 form a CR-type zinc finger. Residues cysteine 143, cysteine 146, cysteine 160, cysteine 163, cysteine 182, cysteine 185, cysteine 196, and cysteine 199 each contribute to the Zn(2+) site. CXXCXGXG motif repeat units follow at residues cysteine 143–glycine 150, cysteine 160–glycine 167, cysteine 182–glycine 189, and cysteine 196–glycine 203.

It belongs to the DnaJ family. Homodimer. Zn(2+) is required as a cofactor.

The protein resides in the cytoplasm. Functionally, participates actively in the response to hyperosmotic and heat shock by preventing the aggregation of stress-denatured proteins and by disaggregating proteins, also in an autonomous, DnaK-independent fashion. Unfolded proteins bind initially to DnaJ; upon interaction with the DnaJ-bound protein, DnaK hydrolyzes its bound ATP, resulting in the formation of a stable complex. GrpE releases ADP from DnaK; ATP binding to DnaK triggers the release of the substrate protein, thus completing the reaction cycle. Several rounds of ATP-dependent interactions between DnaJ, DnaK and GrpE are required for fully efficient folding. Also involved, together with DnaK and GrpE, in the DNA replication of plasmids through activation of initiation proteins. This chain is Chaperone protein DnaJ, found in Salmonella paratyphi A (strain ATCC 9150 / SARB42).